We begin with the raw amino-acid sequence, 305 residues long: Porphobilinogen deaminase (305 aa).

Cys-239 is modified (S-(dipyrrolylmethanemethyl)cysteine).

Belongs to the HMBS family. Monomer. Requires dipyrromethane as cofactor.

The enzyme catalyses 4 porphobilinogen + H2O = hydroxymethylbilane + 4 NH4(+). It participates in porphyrin-containing compound metabolism; protoporphyrin-IX biosynthesis; coproporphyrinogen-III from 5-aminolevulinate: step 2/4. In terms of biological role, tetrapolymerization of the monopyrrole PBG into the hydroxymethylbilane pre-uroporphyrinogen in several discrete steps. The polypeptide is Porphobilinogen deaminase (Dichelobacter nodosus (strain VCS1703A)).